A 460-amino-acid polypeptide reads, in one-letter code: ATP synthase subunit beta (460 aa).

ATP is bound at residue 150-157 (GGAGVGKT).

The protein belongs to the ATPase alpha/beta chains family. As to quaternary structure, F-type ATPases have 2 components, CF(1) - the catalytic core - and CF(0) - the membrane proton channel. CF(1) has five subunits: alpha(3), beta(3), gamma(1), delta(1), epsilon(1). CF(0) has three main subunits: a(1), b(2) and c(9-12). The alpha and beta chains form an alternating ring which encloses part of the gamma chain. CF(1) is attached to CF(0) by a central stalk formed by the gamma and epsilon chains, while a peripheral stalk is formed by the delta and b chains.

Its subcellular location is the cell inner membrane. The catalysed reaction is ATP + H2O + 4 H(+)(in) = ADP + phosphate + 5 H(+)(out). Functionally, produces ATP from ADP in the presence of a proton gradient across the membrane. The catalytic sites are hosted primarily by the beta subunits. This Erwinia tasmaniensis (strain DSM 17950 / CFBP 7177 / CIP 109463 / NCPPB 4357 / Et1/99) protein is ATP synthase subunit beta.